Consider the following 906-residue polypeptide: MLGKLVKKVVGSRNDRIIKRKRRLVKKINQLEPTIAALSDEALGRKTLEFRERLSNGETIDDLLVEAFAVVREASRRVLNMRHFDVQLIGAMVLNDGKIAEMKTGEGKTLVATLAAYLNALPGKGCHVVTVNDYLARRDAEWMGKLYGFLGLSTGVIVSNLDQEQRRRAYACDITYGTNNEFGFDYLRDNMAFTLDQRVQRDPFFAIVDEVDSILIDEARTPLIISGPTEDRSDLYHKVNALIPHLTRQEKEGGPGDYWVDEKARQVYLTESGHETIERLMVEQGLIGSDESLYDAVNIRLMHYINAALKAHALFQRDVDYIVRDGQVIIVDEFTGRAMPGRRWSEGLHQAVEAKENVPVHNENQTLASITFQNYFRLYEKLAGMTGTADTEAAEFHQIYGLEVVMIPPNRPMIRNDMGDLVYLTAREKFAAIVEDIKYCVEHGKPVLVGTTSIENSELLSGILRQAGVPHQVLNAKHHEQEAHIIAQAGRPGAVTIATNMAGRGTDIVLGGSLEEDLAHADPAMAEQVKAEWQQRHDAAVAAGGLHVIGSERHESRRIDNQLRGRSGRQGDPGSSRFYLSLEDPLMRIFASDRVAVLMQRLGMKEGESIEHPWVTRAIENAQRKVEARNFDIRKQLLEYDNVANDQRKVIYHMRTELMRADDISRTIEDIRHDVLGRMFAEHVPPHSLEEQWDVQGLQEVIEREIGLSLPIQRWLDDEPDLHEETLLERIIQEADAAYAAKVEAIGTQVMRHFEKSVMLQVLDNAWKEHLASMDHLRQGIHLRGYAQKDPKQEYKREAFEMFTGMLDSIKQEVVGIVSRVQVHSEEEVQEMEEQGRQPQEMQFQHAEVSALTLEEPPAAPPEESEGYAIPEGPRPFVRSGEKIGRNDPCPCGSGKKYKQCHGRLA.

ATP-binding positions include Q87, 105–109 (GEGKT), and D507. The span at 553–563 (RHESRRIDNQL) shows a compositional bias: basic and acidic residues. 2 disordered regions span residues 553-576 (RHESRRIDNQLRGRSGRQGDPGSS) and 854-906 (LEEP…GRLA). The Zn(2+) site is built by C890, C892, C901, and H902. Residues 896–906 (KKYKQCHGRLA) show a composition bias toward basic residues.

Belongs to the SecA family. Monomer and homodimer. Part of the essential Sec protein translocation apparatus which comprises SecA, SecYEG and auxiliary proteins SecDF-YajC and YidC. It depends on Zn(2+) as a cofactor.

The protein localises to the cell inner membrane. Its subcellular location is the cytoplasm. The enzyme catalyses ATP + H2O + cellular proteinSide 1 = ADP + phosphate + cellular proteinSide 2.. Functionally, part of the Sec protein translocase complex. Interacts with the SecYEG preprotein conducting channel. Has a central role in coupling the hydrolysis of ATP to the transfer of proteins into and across the cell membrane, serving both as a receptor for the preprotein-SecB complex and as an ATP-driven molecular motor driving the stepwise translocation of polypeptide chains across the membrane. The polypeptide is Protein translocase subunit SecA (Methylococcus capsulatus (strain ATCC 33009 / NCIMB 11132 / Bath)).